Consider the following 252-residue polypeptide: 3-dehydroquinate dehydratase (252 aa).

3-dehydroquinate contacts are provided by residues Ser21, 46 to 48 (EWR), and Arg82. The active-site Proton donor/acceptor is the His143. The Schiff-base intermediate with substrate role is filled by Lys170. Residues Arg213, Ser232, and Gln236 each contribute to the 3-dehydroquinate site.

This sequence belongs to the type-I 3-dehydroquinase family. Homodimer.

It catalyses the reaction 3-dehydroquinate = 3-dehydroshikimate + H2O. The protein operates within metabolic intermediate biosynthesis; chorismate biosynthesis; chorismate from D-erythrose 4-phosphate and phosphoenolpyruvate: step 3/7. Functionally, involved in the third step of the chorismate pathway, which leads to the biosynthesis of aromatic amino acids. Catalyzes the cis-dehydration of 3-dehydroquinate (DHQ) and introduces the first double bond of the aromatic ring to yield 3-dehydroshikimate. The chain is 3-dehydroquinate dehydratase from Shigella dysenteriae.